A 799-amino-acid polypeptide reads, in one-letter code: Elongation factor G, mitochondrial (799 aa).

A mitochondrion-targeting transit peptide spans 1–24; the sequence is MRCPSLARLPHRAVSGLTRTPVRF. The tr-type G domain occupies 97 to 384; that stretch reads SRVRNIGIAA…GVIDYLPNPS (288 aa). Residues 106-113, 182-186, and 236-239 contribute to the GTP site; these read AHIDSGKT, DTPGH, and NKMD.

The protein belongs to the TRAFAC class translation factor GTPase superfamily. Classic translation factor GTPase family. EF-G/EF-2 subfamily.

Its subcellular location is the mitochondrion. Its pathway is protein biosynthesis; polypeptide chain elongation. In terms of biological role, mitochondrial GTPase that catalyzes the GTP-dependent ribosomal translocation step during translation elongation. During this step, the ribosome changes from the pre-translocational (PRE) to the post-translocational (POST) state as the newly formed A-site-bound peptidyl-tRNA and P-site-bound deacylated tRNA move to the P and E sites, respectively. Catalyzes the coordinated movement of the two tRNA molecules, the mRNA and conformational changes in the ribosome. The chain is Elongation factor G, mitochondrial (mef1) from Emericella nidulans (strain FGSC A4 / ATCC 38163 / CBS 112.46 / NRRL 194 / M139) (Aspergillus nidulans).